The sequence spans 851 residues: DNA mismatch repair protein MutS (851 aa).

614–621 (GPNMGGKS) serves as a coordination point for ATP.

It belongs to the DNA mismatch repair MutS family.

Its function is as follows. This protein is involved in the repair of mismatches in DNA. It is possible that it carries out the mismatch recognition step. This protein has a weak ATPase activity. The chain is DNA mismatch repair protein MutS from Yersinia pseudotuberculosis serotype O:1b (strain IP 31758).